A 244-amino-acid polypeptide reads, in one-letter code: Ribonuclease P protein component 3 (244 aa).

Belongs to the eukaryotic/archaeal RNase P protein component 3 family. In terms of assembly, consists of a catalytic RNA component and at least 4-5 protein subunits.

Its subcellular location is the cytoplasm. It catalyses the reaction Endonucleolytic cleavage of RNA, removing 5'-extranucleotides from tRNA precursor.. In terms of biological role, part of ribonuclease P, a protein complex that generates mature tRNA molecules by cleaving their 5'-ends. The chain is Ribonuclease P protein component 3 from Methanopyrus kandleri (strain AV19 / DSM 6324 / JCM 9639 / NBRC 100938).